The following is a 474-amino-acid chain: ATP synthase subunit beta 1 (474 aa).

G157–T164 serves as a coordination point for ATP.

The protein belongs to the ATPase alpha/beta chains family. In terms of assembly, F-type ATPases have 2 components, CF(1) - the catalytic core - and CF(0) - the membrane proton channel. CF(1) has five subunits: alpha(3), beta(3), gamma(1), delta(1), epsilon(1). CF(0) has three main subunits: a(1), b(2) and c(9-12). The alpha and beta chains form an alternating ring which encloses part of the gamma chain. CF(1) is attached to CF(0) by a central stalk formed by the gamma and epsilon chains, while a peripheral stalk is formed by the delta and b chains.

It localises to the cell inner membrane. It catalyses the reaction ATP + H2O + 4 H(+)(in) = ADP + phosphate + 5 H(+)(out). In terms of biological role, produces ATP from ADP in the presence of a proton gradient across the membrane. The catalytic sites are hosted primarily by the beta subunits. The sequence is that of ATP synthase subunit beta 1 from Polaromonas naphthalenivorans (strain CJ2).